The sequence spans 398 residues: tRNA-specific 2-thiouridylase MnmA (398 aa).

ATP contacts are provided by residues 18–25 (AMSGGVDS) and leucine 44. Residue cysteine 112 is the Nucleophile of the active site. The cysteines at positions 112 and 213 are disulfide-linked. Glycine 136 contributes to the ATP binding site. The interaction with tRNA stretch occupies residues 163 to 165 (RDQ). Residue cysteine 213 is the Cysteine persulfide intermediate of the active site.

It belongs to the MnmA/TRMU family.

The protein localises to the cytoplasm. The catalysed reaction is S-sulfanyl-L-cysteinyl-[protein] + uridine(34) in tRNA + AH2 + ATP = 2-thiouridine(34) in tRNA + L-cysteinyl-[protein] + A + AMP + diphosphate + H(+). Its function is as follows. Catalyzes the 2-thiolation of uridine at the wobble position (U34) of tRNA, leading to the formation of s(2)U34. This is tRNA-specific 2-thiouridylase MnmA from Sinorhizobium fredii (strain NBRC 101917 / NGR234).